Consider the following 217-residue polypeptide: Protein GrpE (217 aa).

Over residues 1–10 (MSDHAEHAAD) the composition is skewed to basic and acidic residues. Positions 1–39 (MSDHAEHAADAADTDAPEGDDAGGDDGEQAGDDGTSALS) are disordered. The segment covering 12-31 (ADTDAPEGDDAGGDDGEQAG) has biased composition (acidic residues).

The protein belongs to the GrpE family. Homodimer.

Its subcellular location is the cytoplasm. In terms of biological role, participates actively in the response to hyperosmotic and heat shock by preventing the aggregation of stress-denatured proteins, in association with DnaK and GrpE. It is the nucleotide exchange factor for DnaK and may function as a thermosensor. Unfolded proteins bind initially to DnaJ; upon interaction with the DnaJ-bound protein, DnaK hydrolyzes its bound ATP, resulting in the formation of a stable complex. GrpE releases ADP from DnaK; ATP binding to DnaK triggers the release of the substrate protein, thus completing the reaction cycle. Several rounds of ATP-dependent interactions between DnaJ, DnaK and GrpE are required for fully efficient folding. This is Protein GrpE from Halobacterium salinarum (strain ATCC 29341 / DSM 671 / R1).